We begin with the raw amino-acid sequence, 230 residues long: Urease accessory protein UreG (230 aa).

33–40 lines the GTP pocket; the sequence is GPVGSGKT.

Belongs to the SIMIBI class G3E GTPase family. UreG subfamily. In terms of assembly, homodimer. UreD, UreF and UreG form a complex that acts as a GTP-hydrolysis-dependent molecular chaperone, activating the urease apoprotein by helping to assemble the nickel containing metallocenter of UreC. The UreE protein probably delivers the nickel.

It localises to the cytoplasm. Functionally, facilitates the functional incorporation of the urease nickel metallocenter. This process requires GTP hydrolysis, probably effectuated by UreG. The sequence is that of Urease accessory protein UreG from Mycobacteroides abscessus (strain ATCC 19977 / DSM 44196 / CCUG 20993 / CIP 104536 / JCM 13569 / NCTC 13031 / TMC 1543 / L948) (Mycobacterium abscessus).